The sequence spans 93 residues: Integration host factor subunit beta (93 aa).

The protein belongs to the bacterial histone-like protein family. As to quaternary structure, heterodimer of an alpha and a beta chain.

In terms of biological role, this protein is one of the two subunits of integration host factor, a specific DNA-binding protein that functions in genetic recombination as well as in transcriptional and translational control. This is Integration host factor subunit beta from Tolumonas auensis (strain DSM 9187 / NBRC 110442 / TA 4).